The primary structure comprises 200 residues: NAD(P)H dehydrogenase (quinone) (200 aa).

The Flavodoxin-like domain occupies 4 to 191; it reads LLVLYYSMYG…TIARFQGEHV (188 aa). FMN is bound by residues 10–15 and 79–81; these read SMYGHV and TRF. Y12 provides a ligand contact to NAD(+). W99 lines the substrate pocket. Residues 114–120 and H135 each bind FMN; that span reads STASQHG.

This sequence belongs to the WrbA family. FMN serves as cofactor.

It carries out the reaction a quinone + NADH + H(+) = a quinol + NAD(+). The enzyme catalyses a quinone + NADPH + H(+) = a quinol + NADP(+). The sequence is that of NAD(P)H dehydrogenase (quinone) from Nitrosococcus oceani (strain ATCC 19707 / BCRC 17464 / JCM 30415 / NCIMB 11848 / C-107).